A 124-amino-acid chain; its full sequence is UPF0292 protein AF_0905 (124 aa).

Positions 21 to 98 constitute a Toprim domain; that stretch reads GWVVVVEGKK…IPDVEIKRKI (78 aa). Mg(2+) contacts are provided by Glu27, Asp67, and Asp69.

It belongs to the UPF0292 family. Mg(2+) is required as a cofactor.

This Archaeoglobus fulgidus (strain ATCC 49558 / DSM 4304 / JCM 9628 / NBRC 100126 / VC-16) protein is UPF0292 protein AF_0905.